The following is a 316-amino-acid chain: Aspartate-semialdehyde dehydrogenase (316 aa).

NADP(+)-binding positions include 13 to 16 (TGAV) and 41 to 42 (RS). Arg-101 is a phosphate binding site. Residue Cys-132 is the Acyl-thioester intermediate of the active site. Position 159 (Gln-159) interacts with substrate. 162-163 (SG) is an NADP(+) binding site. Lys-216 provides a ligand contact to phosphate. Arg-238 serves as a coordination point for substrate. The Proton acceptor role is filled by His-245. Asn-316 is an NADP(+) binding site.

It belongs to the aspartate-semialdehyde dehydrogenase family. In terms of assembly, homodimer.

The enzyme catalyses L-aspartate 4-semialdehyde + phosphate + NADP(+) = 4-phospho-L-aspartate + NADPH + H(+). The protein operates within amino-acid biosynthesis; L-lysine biosynthesis via DAP pathway; (S)-tetrahydrodipicolinate from L-aspartate: step 2/4. Its pathway is amino-acid biosynthesis; L-methionine biosynthesis via de novo pathway; L-homoserine from L-aspartate: step 2/3. It functions in the pathway amino-acid biosynthesis; L-threonine biosynthesis; L-threonine from L-aspartate: step 2/5. Catalyzes the NADPH-dependent formation of L-aspartate-semialdehyde (L-ASA) by the reductive dephosphorylation of L-aspartyl-4-phosphate. This chain is Aspartate-semialdehyde dehydrogenase (asd), found in Vibrio mimicus.